A 218-amino-acid polypeptide reads, in one-letter code: uncharacterized protein (218 aa).

A run of 2 helical transmembrane segments spans residues 8–28 (LAVF…ATAG) and 158–178 (ILFY…FLLI).

Its subcellular location is the cell membrane. This is an uncharacterized protein from Mycoplasma genitalium (strain ATCC 33530 / DSM 19775 / NCTC 10195 / G37) (Mycoplasmoides genitalium).